A 456-amino-acid chain; its full sequence is MYGNIEKIHFVGIGGIGMSGIAEVLLNLGYQVSGSDLRESDTTERLRSLGGEICIGHAAENLTNVDVVVTSTAVQSDNPEVIEAKHRMVPVIPRAEMLAELMRMKYGIAIAGTHGKTTTTSMVATVLTHAGIDPTIVIGGKLNTLGSNAKLGQGKFLVAEADESDGSFLTLSPTIAVVTNIDADHLDYYTGGLEQIKDTFVSFINKVPFYGLAVLCQEDRNINEIIPRIKKRFMTYGLSSQADLRATHVKLDGFQTTFTAHYKGYRLGEISFNMPGAHNVLNALACTAVALELDVPFDKIQEGFAQFGGVGRRFTVKGEKNGIMVVDDYGHHPAEIRATLGAARNGWPERRLVVAFQPHRYSRTKELFNEFVTCFYDADVLVLTDIYAASEQPIPGVSAERLAEETRRHGQRDVTYIADRNDLPDYLAGIVKEGDIVITLGAGNIWQAGEALVKRL.

112–118 (GTHGKTT) is a binding site for ATP.

It belongs to the MurCDEF family.

The protein resides in the cytoplasm. It carries out the reaction UDP-N-acetyl-alpha-D-muramate + L-alanine + ATP = UDP-N-acetyl-alpha-D-muramoyl-L-alanine + ADP + phosphate + H(+). It functions in the pathway cell wall biogenesis; peptidoglycan biosynthesis. Functionally, cell wall formation. This is UDP-N-acetylmuramate--L-alanine ligase from Trichlorobacter lovleyi (strain ATCC BAA-1151 / DSM 17278 / SZ) (Geobacter lovleyi).